The sequence spans 460 residues: Cation efflux system protein CusC (460 aa).

A signal peptide spans M1 to G17. C18 carries N-palmitoyl cysteine lipidation. C18 carries the S-diacylglycerol cysteine lipid modification.

It belongs to the outer membrane factor (OMF) (TC 1.B.17) family. As to quaternary structure, homotrimer. Component of the cus efflux system composed of CusA, CusB, CusC and CusF.

It localises to the cell outer membrane. Forms pores that allow passive diffusion of cations across the outer membrane. Part of a cation efflux system that mediates resistance to copper and silver. The polypeptide is Cation efflux system protein CusC (cusC) (Escherichia coli O157:H7).